The sequence spans 240 residues: Membrane-spanning 4-domains subfamily A member 15 (240 aa).

Transmembrane regions (helical) follow at residues 73–93 (VLGT…SVLL), 100–120 (VGIF…FIIS), 144–164 (ILSV…FGVT), and 173–193 (LAVL…AMHF).

Belongs to the MS4A family.

Its subcellular location is the membrane. Its function is as follows. May be involved in signal transduction as a component of a multimeric receptor complex. The protein is Membrane-spanning 4-domains subfamily A member 15 (MS4A15) of Homo sapiens (Human).